The chain runs to 274 residues: Siroheme biosynthesis protein MET8 (274 aa).

Residues 23 to 24, 43 to 45, and Phe-93 each bind NAD(+); these read EV and SPD. Asp-141 (proton acceptor) is an active-site residue.

It belongs to the precorrin-2 dehydrogenase / sirohydrochlorin ferrochelatase family. MET8 subfamily. In terms of assembly, homodimer.

The enzyme catalyses precorrin-2 + NAD(+) = sirohydrochlorin + NADH + 2 H(+). The catalysed reaction is siroheme + 2 H(+) = sirohydrochlorin + Fe(2+). It functions in the pathway porphyrin-containing compound metabolism; siroheme biosynthesis; siroheme from sirohydrochlorin: step 1/1. The protein operates within porphyrin-containing compound metabolism; siroheme biosynthesis; sirohydrochlorin from precorrin-2: step 1/1. Catalyzes the conversion of precorrin-2 into siroheme. This reaction consist of the NAD-dependent oxidation of precorrin-2 into sirohydrochlorin and its subsequent ferrochelation into siroheme. This chain is Siroheme biosynthesis protein MET8, found in Saccharomyces cerevisiae (strain ATCC 204508 / S288c) (Baker's yeast).